Reading from the N-terminus, the 565-residue chain is Periplasmic trehalase (565 aa).

The signal sequence occupies residues 1–30; sequence MKSPTPSRPQKMALIPACIFLCFAALSVQA. Substrate contacts are provided by residues Arg152, 159-160, Asn196, 205-207, 277-279, and Gly310; these read WD, RSQ, and RPE. Active-site proton donor/acceptor residues include Asp312 and Glu496. Position 511 (Glu511) interacts with substrate. The interval 539 to 565 is disordered; sequence CDNVPATRPLSESTTQPLKQKEAEPTP.

It belongs to the glycosyl hydrolase 37 family. Monomer.

It is found in the periplasm. The enzyme catalyses alpha,alpha-trehalose + H2O = alpha-D-glucose + beta-D-glucose. Its function is as follows. Provides the cells with the ability to utilize trehalose at high osmolarity by splitting it into glucose molecules that can subsequently be taken up by the phosphotransferase-mediated uptake system. This is Periplasmic trehalase from Escherichia coli (strain SMS-3-5 / SECEC).